A 530-amino-acid polypeptide reads, in one-letter code: Testis-expressed protein 44 (530 aa).

The span at 1 to 10 (MTAEPLEDPE) shows a compositional bias: acidic residues. Disordered stretches follow at residues 1-85 (MTAE…FIRT), 207-233 (ATSA…TSLL), 256-290 (ENNR…QPVL), and 305-384 (QTSV…SPDF). Polar residues-rich tracts occupy residues 11-26 (ASSS…SSDN), 222-233 (GQDNPEETTSLL), and 257-280 (NNRT…TLGN). A compositionally biased stretch (pro residues) spans 365 to 381 (PPDPPDPGSPGGSPPHS). Ser-468 is modified (phosphoserine).

It localises to the cytoplasm. This is Testis-expressed protein 44 (Tex44) from Mus musculus (Mouse).